A 450-amino-acid polypeptide reads, in one-letter code: TNF receptor-associated factor family protein DDB_G0273433/DDB_G0273509 (450 aa).

An RING-type; degenerate zinc finger spans residues 26-73 (CQICFNSVIDFKKETLSFDVLQCRNGHISCHECWNRQLSIKQECPSCK). TRAF-type zinc fingers lie at residues 129–185 (HHLK…KKLN) and 186–243 (KHIE…SQLS). A coiled-coil region spans residues 257-297 (QNVMDLHKLQLDECNQDYRKLEKQNRDLEKRLFYLESTVNS). The region spanning 319 to 439 (VYKGKWVINN…NNSLTISISI (121 aa)) is the MATH domain.

Belongs to the TNF receptor-associated factor family. A subfamily.

The protein resides in the cytoplasm. In terms of biological role, probable adapter protein and signal transducer that links members of the tumor necrosis factor receptor family to different signaling pathways by association with the receptor cytoplasmic domain and kinases. The protein is TNF receptor-associated factor family protein DDB_G0273433/DDB_G0273509 of Dictyostelium discoideum (Social amoeba).